The primary structure comprises 257 residues: Type 2 phosphatidylinositol 4,5-bisphosphate 4-phosphatase (257 aa).

A compositionally biased stretch (basic and acidic residues) spans 1-10 (MAADGVDERS). The tract at residues 1 to 34 (MAADGVDERSPLLSASHSGSVTPTAPPYLQDSSP) is disordered. Polar residues predominate over residues 13 to 23 (LSASHSGSVTP). At Thr-22 the chain carries Phosphothreonine. Residue Ser-33 is modified to Phosphoserine. Cys-107 is a catalytic residue. The CX5R motif signature appears at 107–113 (CKDTSRR). Transmembrane regions (helical) follow at residues 192–212 (CCAY…LTVG) and 227–247 (WAIA…WGAI).

It is found in the late endosome membrane. The protein resides in the lysosome membrane. Its subcellular location is the cytoplasmic vesicle. It localises to the phagosome membrane. The protein localises to the cell membrane. The catalysed reaction is a 1,2-diacyl-sn-glycero-3-phospho-(1D-myo-inositol-4,5-bisphosphate) + H2O = a 1,2-diacyl-sn-glycero-3-phospho-(1D-myo-inositol-5-phosphate) + phosphate. Functionally, catalyzes the hydrolysis of phosphatidylinositol-4,5-bisphosphate (PtdIns-4,5-P2) to phosphatidylinositol-4-phosphate (PtdIns-4-P). Does not hydrolyze phosphatidylinositol 3,4,5-trisphosphate, phosphatidylinositol 3,4-bisphosphate, inositol 3,5-bisphosphate, inositol 3,4-bisphosphate, phosphatidylinositol 5-monophosphate, phosphatidylinositol 4-monophosphate and phosphatidylinositol 3-monophosphate. Negatively regulates the phagocytosis of large particles by reducing phagosomal phosphatidylinositol 4,5-bisphosphate accumulation during cup formation. In Bos taurus (Bovine), this protein is Type 2 phosphatidylinositol 4,5-bisphosphate 4-phosphatase.